Here is a 215-residue protein sequence, read N- to C-terminus: Probable transaldolase (215 aa).

Residue Lys83 is the Schiff-base intermediate with substrate of the active site.

Belongs to the transaldolase family. Type 3B subfamily.

It is found in the cytoplasm. It carries out the reaction D-sedoheptulose 7-phosphate + D-glyceraldehyde 3-phosphate = D-erythrose 4-phosphate + beta-D-fructose 6-phosphate. Its pathway is carbohydrate degradation; pentose phosphate pathway; D-glyceraldehyde 3-phosphate and beta-D-fructose 6-phosphate from D-ribose 5-phosphate and D-xylulose 5-phosphate (non-oxidative stage): step 2/3. In terms of biological role, transaldolase is important for the balance of metabolites in the pentose-phosphate pathway. The sequence is that of Probable transaldolase from Anaeromyxobacter sp. (strain Fw109-5).